Consider the following 280-residue polypeptide: MNSYLLAFKSGFGFLSTIPVGISMEGIDELMKKIYFYPVVGAVLGLLIGAVAFIGQVIFPGPVLAALLMGFIYYITGFNHLDGITDIGDGFMAHGSLEKKIKALKDTTIGTGGVSFCILLLLTLYGSIRAVQQEGSAVFGSNLPVLMFESMFIAEVSAKQSMLTIAAFGKPIPPREKQAYPGLGAMTINGATRKNFLIGFVFGAIVCFLPFGWIGLLPYLGACLVALVILNRSYAHFGGLNGDGIGTANEIGRVTALIILAVLLQLSLNGYMGGFKWTLL.

Transmembrane regions (helical) follow at residues 4–24 (YLLAFKSGFGFLSTIPVGISM), 39–59 (VVGAVLGLLIGAVAFIGQVIF), 61–81 (GPVLAALLMGFIYYITGFNHL), 108–128 (TIGTGGVSFCILLLLTLYGSI), 196–216 (FLIGFVFGAIVCFLPFGWIGL), and 255–275 (TALIILAVLLQLSLNGYMGGF).

Belongs to the CobS family. It depends on Mg(2+) as a cofactor.

It localises to the cell membrane. It carries out the reaction alpha-ribazole + adenosylcob(III)inamide-GDP = adenosylcob(III)alamin + GMP + H(+). The catalysed reaction is alpha-ribazole 5'-phosphate + adenosylcob(III)inamide-GDP = adenosylcob(III)alamin 5'-phosphate + GMP + H(+). The protein operates within cofactor biosynthesis; adenosylcobalamin biosynthesis; adenosylcobalamin from cob(II)yrinate a,c-diamide: step 7/7. Its function is as follows. Joins adenosylcobinamide-GDP and alpha-ribazole to generate adenosylcobalamin (Ado-cobalamin). Also synthesizes adenosylcobalamin 5'-phosphate from adenosylcobinamide-GDP and alpha-ribazole 5'-phosphate. This is Adenosylcobinamide-GDP ribazoletransferase from Methanosarcina barkeri (strain Fusaro / DSM 804).